The primary structure comprises 2372 residues: MDSYLGRDTISFPLSKELEAEWTDNGEVLLRSHLLKACWALLLGRLSETHTITFAVLEQLVAPPRDACSKLVASSPHLETWQISDRPDSLLVDAAKETHREPLSGTQTSTAVVIRWHDELNGPTSLPYAFNAIVVLDCSISPAKVYMEYSRASLTVNQAWSQLTATVHILEQLVMSPGISLRELDFLGSYSTKLILQWNNPYSLARPQVCIHTLILEHCRSQPDAEALCAWDGSVTYAELDRFSLAVAHQLLSLGVGPESVVPLYFEKSRWTVVAMLGVLRAGGAFVLLDPSHPMPRLAEICSEVQATVVITSESLQELGRKLGPRAVTILDTINSHVDTGRNAFNTSVKPSNAAYVAFTSGSTGKPKGIVIEHQCFVANTLAQNAVQNINSQTRAFQFASYGFDSSILETLMTLVAGGCVCIPSEKQRLNGLADAIRGMRANWLELTPSVARFINPEEVPDVSSVLLVGEPMSQDHITQWSGSGKIQLLNAYGPAECSVVATVQPNVQLEDPQNIGCSYSSHCWITNPQDHDQLEPLGAVGELLISGPIVARGYLNQPHQKSFISNPRWATRFGIPPGERVYKTGDLVRYNLDDGALRYVGRKDREVKIHGQRVDLHEIEHHASRFQKGMLAVADVLQVNGGSAGKLLALFIVADNDETRMTKESFVVPMNDTLLDLVTSIKHWLRDCLPPYMIPTKYTFVNRFPLTRTGKLDRRALVDLGAASSHSSTREQPSNQRDKEDVELDPGLSAKENTLCSVFAEALGCLAINIGPEDGFYDMGGNSLAAIELVARARNHGLEITVADVIRLQNPRKIARCTAESKDVREISPFSLLVDTEQSLSAATAQCGIGREMIEDIYPCTPLQEGLMHLSITNPGAFMGTYRFSLAPSTDLYRVWAAWEQLWLVHPILRTRIIQLQDGQKLQVVTKQKLPFEDISGMDNCQPMNLGTPLARVTYHRGRGSSGSDSGIFLLTMHHALFDGWSYLQMLGDLQVIYAGDKLSPRPSFKHAINYISKLSIEEGRSFWSQELKDFQATMFPTSSRRPTTSPHWQVRSQQIILAESDMNWTLANKIKLAWTLVISSQTHSNDVVYGLTVSGRNAPVPEIDRIVGPTFATFPFRTQLEDDISVEDMLVQMRQHDVSIMPFEHVGLRRIAESSSDAALACGFQNLLTIRLQSLQMPPGALIELPENENHDLKFASYALSIVAQQEGTSLGVKAIFNSCILGADRTEALLEQFDTLLQRILREPGTKMKDLRTQLSPEWQQLAAINKKSPSHLRCLHDIINHFSITQPNSEAVCAWDGSLTYSELVALARRLAGLLQSFGSGSEPGAVIGICVERSKWFPVAILGVMMSGAAMVLLEPNFPTQRLRHILRDAGARTMICSTVFQEKCAGLVDDMLVLTHDIVTQADYDAWTPSAVSHHDPMYVAFTSGSTGAPKGVVIEHGMVYSMLKAHKDIIGASIASRGLLFASPAFDICLAEIVLILCSGGCVCVPSEAQRMNSLAKTMTTMQVNMAMLTPSVARTLAPAAIPCLQTLILGGEAPSASDLETWASRVKLHQSYGPAECAMYTTTTHPLTSSSDLGNVGSSQNASCWIVDPDNHDELQPVGSIGELLIGGPIVGRGYINRAQESAAAFICDPVWSENFPFLQGARLYKTGDLAILNADGSLNLVGRKDTQVKLNGQRIELHEIEHCAERYQHGTAVIAELIKPVGIQRPRLIMFVYDPATVETTVGIDSTCHDHRGLFLPPSRQNQAYLEGVRDHLNQHLPPYMIPSHFLSLSRLPLSPSGKADRKTLRQVASKMDRETLEMYLDNPVAEKRKPTTEQERFVRASFATALSLNEEAIGMDDSFFALGGDSITAMRVLTLCRRRNMAISMQEFLSKNTVTLFCKHVILIQGQAVDSKRQKLLDSQDLVRGEDHLVQFQHLDYQLDMVRSQLNLLKSDSIQEIYPCSDAHSGVLELYTSNYTSTAIFEIRATGSVTPMQVSNAWSQLVHRHVALRTVLMKEPKVHADYLHVVLDKGPAQILALPRSKNALSELKGLEPVKSWGLSPPHRLIIGHDHSGTLFMRLETGYALIDAFSMTILLEELSLLLQGQPLPERGVSYREYLSNLRSQSSAETLQYWTQVLYGVYPSHLPRVPVTQSPLPEPRSQSRCLPFAQSKRLDSFWRSNNLTITNVFQLAWALTLAHYTNSRDVCFGTITSGRDIPHLEVWNIVGSFFNVLPCRIAIEPTRTVIDTLRQNQEDIQRRNDHQYCSIPDMIRKSGIRSLDNNQQLFNTVLTVQNPFSIQSSTAKDGSNEIDVKLIDLEDATEYDLCVAILPSPSHLKVELRYWSTTVSEGYASDILDRLFSQLEQIVHHATKPDFVQVYECTKH.

Residues 217 to 610 form an adenylation 1 region; that stretch reads EHCRSQPDAE…VGRKDREVKI (394 aa). Residues 723–745 are disordered; the sequence is AASSHSSTREQPSNQRDKEDVEL. Residues 725–736 show a composition bias toward polar residues; sequence SSHSSTREQPSN. The region spanning 750–823 is the Carrier 1 domain; it reads SAKENTLCSV…KIARCTAESK (74 aa). Serine 784 is modified (O-(pantetheine 4'-phosphoryl)serine). A condensation 1 region spans residues 856–1122; it reads EDIYPCTPLQ…FATFPFRTQL (267 aa). The interval 1290 to 1679 is adenylation 2; sequence QPNSEAVCAW…VGRKDTQVKL (390 aa). The 77-residue stretch at 1819–1895 folds into the Carrier 2 domain; it reads KPTTEQERFV…LFCKHVILIQ (77 aa). At serine 1856 the chain carries O-(pantetheine 4'-phosphoryl)serine. A condensation 2 region spans residues 1962–2227; it reads TSNYTSTAIF…FNVLPCRIAI (266 aa).

It participates in alkaloid biosynthesis. Its function is as follows. Dipeptide synthase; part of the gene cluster that mediates the biosynthesis of the mycotoxins roquefortine C and meleagrin. The first stage is catalyzed by the dipeptide synthase roqA which condenses histidine and tryptophan to produce histidyltryptophanyldiketopiperazine (HTD). HTD is then converted to roquefortine C through two possible pathways. In the first pathway, prenyltransferase roqD transforms HTD to the intermediate roquefortine D, which is in turn converted to roquefortine C by the cytochrome P450 monooxygenase roqR. In the second pathway, HTD is first converted to the intermediate dehydrohistidyltryptophanyldi-ketopiperazine (DHTD) by roqR which is then prenylated by roqD to form roquefortine C. Roquefortine C can be further transformed to meleagrin via three more reactions including oxydation to glandicolin A by roqM, which is further reduced to glandicoline B by roqO. Finally, glandicoline B is converted to meleagrin by the glandicoline B O-methyltransferase roqN. More studies identified further branching and additional metabolites produced by the roquefortine/meleagrin cluster, including roquefortine F, roquefortine L, roquefortine M, roquefortine N and neoxaline. This chain is Nonribosomal peptide synthase roqA, found in Penicillium rubens (strain ATCC 28089 / DSM 1075 / NRRL 1951 / Wisconsin 54-1255) (Penicillium chrysogenum).